Here is a 242-residue protein sequence, read N- to C-terminus: MTHSPLAQFDIKKLIDIKMFGFDVSFTNSSIYMLLASILALTYFYLAFYNRKLVPSRLQVSAEIVYNLVADMLNQNIGVKGRKFIPLIFSLFIFILFCNLLGMTPYSFTTTSHIIVTFTLAILVFLMVTIVGFVKHGLRFLTLFLPHGTPLWLAPLMIVIELFTYLARPVSLSLRLAANMMAGHVLLKVIAGFTVSLMIYLKFLPIPIMVILIGFEIFVAILQAYIFTILSCMYLNDVINLH.

6 helical membrane passes run 29 to 49 (SSIYMLLASILALTYFYLAFY), 84 to 104 (FIPLIFSLFIFILFCNLLGMT), 114 to 134 (IIVTFTLAILVFLMVTIVGFV), 140 to 160 (FLTLFLPHGTPLWLAPLMIVI), 181 to 201 (MAGHVLLKVIAGFTVSLMIYL), and 203 to 223 (FLPIPIMVILIGFEIFVAILQ).

The protein belongs to the ATPase A chain family. As to quaternary structure, F-type ATPases have 2 components, CF(1) - the catalytic core - and CF(0) - the membrane proton channel. CF(1) has five subunits: alpha(3), beta(3), gamma(1), delta(1), epsilon(1). CF(0) has three main subunits: a(1), b(2) and c(9-12). The alpha and beta chains form an alternating ring which encloses part of the gamma chain. CF(1) is attached to CF(0) by a central stalk formed by the gamma and epsilon chains, while a peripheral stalk is formed by the delta and b chains.

Its subcellular location is the cell membrane. In terms of biological role, key component of the proton channel; it plays a direct role in the translocation of protons across the membrane. This Rickettsia africae (strain ESF-5) protein is ATP synthase subunit a.